We begin with the raw amino-acid sequence, 1180 residues long: Tudor domain-containing protein 1 (1180 aa).

Disordered stretches follow at residues 1–66 (MSVK…KKNN) and 79–138 (SQED…RPAK). The segment covering 27–41 (NFEKNENKLPPHESL) has biased composition (basic and acidic residues). Composition is skewed to polar residues over residues 79–91 (SQED…NPNG) and 110–122 (NSVS…SNSP). 8 residues coordinate Zn(2+): Cys170, Cys173, Cys181, Cys184, Cys190, Cys194, His202, and Cys206. Residues 170-206 (CHRCGLFGSLRCSQCKQTYYCSTACQRRDWSAHSIVC) form an MYND-type zinc finger. The 61-residue stretch at 312-372 (IPVKGEVCIA…YHLNRNIDLF (61 aa)) folds into the Tudor 1 domain. Residues 450–469 (SGQDSKKENADQSDPEDVGK) form a disordered region. 3 consecutive Tudor domains span residues 541–600 (YPAI…LLEL), 762–821 (KAEI…FLNL), and 990–1048 (RPRI…HLAL).

It belongs to the TDRD1 family. Found in a mRNP complex, at least composed of TDRD1, TDRD6, TDRD7 and DDX4. Interacts with MAEL. Interacts with PIWIL1, PIWIL2 and PIWIL4 (when methylated on arginine residues). Interacts with TDRD12. As to expression, testis and ovary specific. Also expressed in several cancers.

The protein localises to the cytoplasm. In terms of biological role, plays a central role during spermatogenesis by participating in the repression transposable elements and preventing their mobilization, which is essential for the germline integrity. Acts via the piRNA metabolic process, which mediates the repression of transposable elements during meiosis by forming complexes composed of piRNAs and Piwi proteins and governs the methylation and subsequent repression of transposons. Required for the localization of Piwi proteins to the meiotic nuage. Involved in the piRNA metabolic process by ensuring the entry of correct transcripts into the normal piRNA pool and limiting the entry of cellular transcripts into the piRNA pathway. May act by allowing the recruitment of piRNA biogenesis or loading factors that ensure the correct entry of transcripts and piRNAs into Piwi proteins. The polypeptide is Tudor domain-containing protein 1 (TDRD1) (Homo sapiens (Human)).